The following is a 406-amino-acid chain: DNA repair protein RAD55 (406 aa).

43-50 provides a ligand contact to ATP; the sequence is GPPGIGKT. The interval 385–406 is disordered; that stretch reads DSNDNPLPNAEGKEEIIYDSEG.

This sequence belongs to the RecA family. RAD55 subfamily.

It localises to the nucleus. Its function is as follows. Required for radiation resistance and meiotic viability and presumably acts in recombination and recombinational DNA repair pathways. The protein is DNA repair protein RAD55 (RAD55) of Saccharomyces cerevisiae (strain ATCC 204508 / S288c) (Baker's yeast).